Here is a 204-residue protein sequence, read N- to C-terminus: Casparian strip membrane protein 2 (204 aa).

Residues 1–42 lie on the Cytoplasmic side of the membrane; sequence MKNESTTIDVPAESSSAMKGKAPLIGVARDHTTSGSGGYNRG. The chain crosses the membrane as a helical span at residues 43-63; sequence LSIFDFLLRLAAIVAALAAAA. Over 64–92 the chain is Extracellular; that stretch reads TMGTSDETLPFFTQFLQFEASYDDLPTFQ. A helical membrane pass occupies residues 93-113; that stretch reads FFVIAMALVGGYLVLSLPISV. Residues 114–125 are Cytoplasmic-facing; the sequence is VTILRPLATAPR. A helical membrane pass occupies residues 126–146; it reads LLLLVLDTAVLALNTAAASSA. At 147-178 the chain is on the extracellular side; it reads AAISYLAHSGNQNTNWLPICQQFGDFCQKSSG. The chain crosses the membrane as a helical span at residues 179–199; it reads AVVSAFISVVFFTILVVISGV. The Cytoplasmic portion of the chain corresponds to 200–204; that stretch reads ALKRH.

Belongs to the Casparian strip membrane proteins (CASP) family. As to quaternary structure, homodimer and heterodimers.

It is found in the cell membrane. Regulates membrane-cell wall junctions and localized cell wall deposition. Required for establishment of the Casparian strip membrane domain (CSD) and the subsequent formation of Casparian strips, a cell wall modification of the root endodermis that determines an apoplastic barrier between the intraorganismal apoplasm and the extraorganismal apoplasm and prevents lateral diffusion. The chain is Casparian strip membrane protein 2 from Arabidopsis lyrata subsp. lyrata (Lyre-leaved rock-cress).